A 90-amino-acid chain; its full sequence is YcgL domain-containing protein Spro_2755 (90 aa).

The YcgL domain occupies 1-85 (MLCVIYRSSK…PLENLLKQHL (85 aa)).

The chain is YcgL domain-containing protein Spro_2755 from Serratia proteamaculans (strain 568).